Here is a 341-residue protein sequence, read N- to C-terminus: Methionine import ATP-binding protein MetN 1 (341 aa).

Residues 2 to 241 enclose the ABC transporter domain; it reads IKLNQIVKRY…PQHEVTKRFV (240 aa). 38 to 45 provides a ligand contact to ATP; the sequence is GFSGAGKS.

It belongs to the ABC transporter superfamily. Methionine importer (TC 3.A.1.24) family. The complex is composed of two ATP-binding proteins (MetN), two transmembrane proteins (MetI) and a solute-binding protein (MetQ).

The protein localises to the cell membrane. It carries out the reaction L-methionine(out) + ATP + H2O = L-methionine(in) + ADP + phosphate + H(+). The enzyme catalyses D-methionine(out) + ATP + H2O = D-methionine(in) + ADP + phosphate + H(+). Functionally, part of the ABC transporter complex MetNIQ involved in methionine import. Responsible for energy coupling to the transport system. The sequence is that of Methionine import ATP-binding protein MetN 1 from Staphylococcus epidermidis (strain ATCC 12228 / FDA PCI 1200).